Consider the following 335-residue polypeptide: MSLDINQIALHQLIKRDEQNLELVLRDSLLEPTTTVVEMVAELHRVYSAKNKAYGLFSEESELAQALRLQRQGEEDFLAFSRAATGRLRDELAKYPFADGGIVLFCHYRYLAVEYLLVTVLNNLSSMRVNENLDINPTHYLDINHADIVARIDLTEWETNPQSTRYLTFLKGRVGRKVADFFMDFLGASEGLNAKAQNRGLLQAVDDFTAEAQLDKAERQNVRQQVYSYCNEQLQAGEEIELESLSKELSGVSEVSFSEFTAEKGYELEESFPADRSTLRQLTKYAGSGGGLTINFDAMLLGERIFWDPATDTLTIKGTPPNLRDQLQRRTSGGK.

It belongs to the YejK family.

It localises to the cytoplasm. The protein resides in the nucleoid. This is Nucleoid-associated protein YejK from Salmonella schwarzengrund (strain CVM19633).